We begin with the raw amino-acid sequence, 338 residues long: MATESILITTLPMDLNSQINNVTFGLNENETLCENWREIHHLVFHLANTCFAAGLVIPSTLNLHMILLRGMLCLGCIFFIIWAILFRCALDIMIWNATFLSMNFMHFIYLVYKKRPIKIEKDLKGIYHRMFEPLHVSPELFNRLTGQFCEIKTLAKGQTYAIEDKTSVDDRLSILLKGIMKVSYRGHFLHAISPNAYIDSPEFRSTEMNRGETFQVTITADDNCVFLCWSRERLTYFLESEPFLYEIFKYLIGKDITTKLYSLNDPTLGKKKKLDTQPSLCSQLSVMEMRNSLASTSDNEDGLQTFLRGTSTTSSQRNNQQEFCNAYGVGPLSHAVFC.

At 1 to 40 (MATESILITTLPMDLNSQINNVTFGLNENETLCENWREIH) the chain is on the extracellular side. Residues Asn-21 and Asn-29 are each glycosylated (N-linked (GlcNAc...) asparagine). A helical transmembrane segment spans residues 41 to 61 (HLVFHLANTCFAAGLVIPSTL). Over 62-65 (NLHM) the chain is Cytoplasmic. The helical transmembrane segment at 66–86 (ILLRGMLCLGCIFFIIWAILF) threads the bilayer. The Extracellular portion of the chain corresponds to 87-91 (RCALD). Residues 92 to 112 (IMIWNATFLSMNFMHFIYLVY) traverse the membrane as a helical segment. Residues 113–338 (KKRPIKIEKD…VGPLSHAVFC (226 aa)) are Cytoplasmic-facing.

This sequence belongs to the popeye family.

It localises to the lateral cell membrane. Its subcellular location is the cell junction. The protein resides in the tight junction. The protein localises to the membrane. It is found in the cell membrane. It localises to the sarcolemma. Its subcellular location is the caveola. Its function is as follows. Cell adhesion molecule involved in the establishment and/or maintenance of cell integrity. May play a role in vamp3-mediated vesicular transport and recycling of different receptor molecules. May be involved in the formation and regulation of the tight junction (TJ) paracellular permeability barrier in epithelial cells. May induce primordial adhesive contact and aggregation of epithelial cells in a Ca(2+)-independent manner. May be involved in epithelial movement during corneal sheet formation and regeneration. May play a role in the regulation of cell shape and movement by modulating the Rho-GTPase activity. May be involved in skeletal muscle and heart development as well as in the maintenance of heart function. May also be involved in striated muscle regeneration and in the regulation of cell spreading. This is Popeye domain-containing protein 1 (popdc1) from Xenopus tropicalis (Western clawed frog).